Reading from the N-terminus, the 807-residue chain is Maternal DNA replication licensing factor mcm3 (807 aa).

One can recognise an MCM domain in the interval 295–502 (IFEHLSKSLA…NDQEIADHVL (208 aa)). 345 to 352 (GDPSVAKS) lines the ATP pocket. The Arginine finger motif lies at 477 to 480 (SRFD). Residues 664–673 (KTDKDLHDEN) show a composition bias toward basic and acidic residues. The interval 664-741 (KTDKDLHDEN…QDGKRSLSQN (78 aa)) is disordered. The segment covering 707 to 723 (FSEQDSSLNENLSQSLR) has biased composition (polar residues). Residues 727 to 741 (KKAESQDGKRSLSQN) show a composition bias toward basic and acidic residues.

The protein belongs to the MCM family. Component of the mcm2-7 complex (RLF-M). The complex forms a toroidal hexameric ring with the proposed subunit order mcm2-mcm6-mcm4-mcm7-mcm3-mcm5. The heterodimer of mmcm3/mcm5 interacts with mcm4, mmcm6, mcm7 and weakly with mcm2. Interacts with mcm7, though this interaction may not be direct, and remains in a complex with mcm7 throughout the cell cycle. Component of the CMG helicase complex, composed of the mcm2-7 complex, the GINS complex and cdc45.

Its subcellular location is the nucleus. The protein resides in the chromosome. It catalyses the reaction ATP + H2O = ADP + phosphate + H(+). Its function is as follows. Acts as a component of the mcm2-7 complex (mcm complex) which is the putative replicative helicase essential for 'once per cell cycle' DNA replication initiation and elongation in eukaryotic cells. The active ATPase sites in the mcm2-7 ring are formed through the interaction surfaces of two neighboring subunits such that a critical structure of a conserved arginine finger motif is provided in trans relative to the ATP-binding site of the Walker A box of the adjacent subunit. The six ATPase active sites, however, are likely to contribute differentially to the complex helicase activity. The existence of maternal and zygotic forms of mcm3 and mcm6 suggests that specific forms of mcm2-7 complexes may be used during different stages of development. This Xenopus laevis (African clawed frog) protein is Maternal DNA replication licensing factor mcm3 (mmcm3).